A 193-amino-acid polypeptide reads, in one-letter code: Putative 3-methyladenine DNA glycosylase (193 aa).

The protein belongs to the DNA glycosylase MPG family.

This Nitrosospira multiformis (strain ATCC 25196 / NCIMB 11849 / C 71) protein is Putative 3-methyladenine DNA glycosylase.